Reading from the N-terminus, the 738-residue chain is AP-4 complex subunit beta-1 (738 aa).

The segment at 534–600 (CSPKSDPSLG…NASFATSGHL (67 aa)) is hinge. An ear; mediates interaction with TEPSIN region spans residues 601 to 738 (ISEENKEGAQ…VIGTVGDIKS (138 aa)).

It belongs to the adaptor complexes large subunit family. In terms of assembly, adaptor protein complex 4 (AP-4) is a heterotetramer composed of two large adaptins (epsilon-type subunit AP4E1 and beta-type subunit AP4B1), a medium adaptin (mu-type subunit AP4M1) and a small adaptin (sigma-type AP4S1). Interacts with TEPSIN; this interaction requires the presence of a functional AP-4 complex. Interacts with GRIA2; probably indirect it mediates the somatodendritic localization of GRIA2 in neurons.

It localises to the golgi apparatus. It is found in the trans-Golgi network membrane. Functionally, component of the adaptor protein complex 4 (AP-4). Adaptor protein complexes are vesicle coat components involved both in vesicle formation and cargo selection. They control the vesicular transport of proteins in different trafficking pathways. AP-4 forms a non clathrin-associated coat on vesicles departing the trans-Golgi network (TGN) and may be involved in the targeting of proteins from the trans-Golgi network (TGN) to the endosomal-lysosomal system. It is also involved in protein sorting to the basolateral membrane in epithelial cells and the proper asymmetric localization of somatodendritic proteins in neurons. AP-4 is involved in the recognition and binding of tyrosine-based sorting signals found in the cytoplasmic part of cargos, but may also recognize other types of sorting signal. The protein is AP-4 complex subunit beta-1 of Mus musculus (Mouse).